The following is an 86-amino-acid chain: Large ribosomal subunit protein bL28 (86 aa).

This sequence belongs to the bacterial ribosomal protein bL28 family.

This chain is Large ribosomal subunit protein bL28, found in Bacteroides fragilis (strain ATCC 25285 / DSM 2151 / CCUG 4856 / JCM 11019 / LMG 10263 / NCTC 9343 / Onslow / VPI 2553 / EN-2).